A 277-amino-acid chain; its full sequence is Large ribosomal subunit protein uL2 (277 aa).

The disordered stretch occupies residues 218 to 277; it reads PTVRGSVMNPNDHPHGGGEGKAPVGRKAPSTPWGKPALGLKTRNKKAKSDKLIVRRRNEK. The segment covering 264–277 has biased composition (basic and acidic residues); it reads AKSDKLIVRRRNEK.

The protein belongs to the universal ribosomal protein uL2 family. As to quaternary structure, part of the 50S ribosomal subunit. Forms a bridge to the 30S subunit in the 70S ribosome.

Its function is as follows. One of the primary rRNA binding proteins. Required for association of the 30S and 50S subunits to form the 70S ribosome, for tRNA binding and peptide bond formation. It has been suggested to have peptidyltransferase activity; this is somewhat controversial. Makes several contacts with the 16S rRNA in the 70S ribosome. The protein is Large ribosomal subunit protein uL2 of Streptococcus pyogenes serotype M4 (strain MGAS10750).